The chain runs to 342 residues: S-adenosylmethionine:tRNA ribosyltransferase-isomerase (342 aa).

The protein belongs to the QueA family. In terms of assembly, monomer.

The protein resides in the cytoplasm. The enzyme catalyses 7-aminomethyl-7-carbaguanosine(34) in tRNA + S-adenosyl-L-methionine = epoxyqueuosine(34) in tRNA + adenine + L-methionine + 2 H(+). Its pathway is tRNA modification; tRNA-queuosine biosynthesis. Its function is as follows. Transfers and isomerizes the ribose moiety from AdoMet to the 7-aminomethyl group of 7-deazaguanine (preQ1-tRNA) to give epoxyqueuosine (oQ-tRNA). The chain is S-adenosylmethionine:tRNA ribosyltransferase-isomerase from Streptococcus sanguinis (strain SK36).